The primary structure comprises 114 residues: MARVKRGNIARKRAKKILQLAKGYRGAHSRLFRIANQQVMKALRYSYVGRKQKKRVFRKLWITRINAASRLNGLSYSRLIHNFKKSNIELNRKMLSQIAVLDIPTFNQLIAISK.

The protein belongs to the bacterial ribosomal protein bL20 family.

The protein localises to the plastid. The protein resides in the chloroplast. In terms of biological role, binds directly to 23S ribosomal RNA and is necessary for the in vitro assembly process of the 50S ribosomal subunit. It is not involved in the protein synthesizing functions of that subunit. This chain is Large ribosomal subunit protein bL20c (rpl20), found in Trieres chinensis (Marine centric diatom).